A 131-amino-acid chain; its full sequence is Small ribosomal subunit protein uS11 (131 aa).

The protein belongs to the universal ribosomal protein uS11 family. As to quaternary structure, part of the 30S ribosomal subunit. Interacts with proteins S7 and S18. Binds to IF-3.

Its function is as follows. Located on the platform of the 30S subunit, it bridges several disparate RNA helices of the 16S rRNA. Forms part of the Shine-Dalgarno cleft in the 70S ribosome. The protein is Small ribosomal subunit protein uS11 of Trichodesmium erythraeum (strain IMS101).